A 323-amino-acid chain; its full sequence is 4-hydroxy-3-methylbut-2-enyl diphosphate reductase (323 aa).

Position 13 (Cys13) interacts with [4Fe-4S] cluster. (2E)-4-hydroxy-3-methylbut-2-enyl diphosphate-binding residues include His42 and His75. Dimethylallyl diphosphate contacts are provided by His42 and His75. His42 and His75 together coordinate isopentenyl diphosphate. Residue Cys97 coordinates [4Fe-4S] cluster. His125 provides a ligand contact to (2E)-4-hydroxy-3-methylbut-2-enyl diphosphate. Position 125 (His125) interacts with dimethylallyl diphosphate. His125 is a binding site for isopentenyl diphosphate. Glu127 functions as the Proton donor in the catalytic mechanism. Thr168 provides a ligand contact to (2E)-4-hydroxy-3-methylbut-2-enyl diphosphate. Residue Cys198 coordinates [4Fe-4S] cluster. Positions 226, 227, 228, and 270 each coordinate (2E)-4-hydroxy-3-methylbut-2-enyl diphosphate. The dimethylallyl diphosphate site is built by Ser226, Ser227, Asn228, and Ser270. Isopentenyl diphosphate is bound by residues Ser226, Ser227, Asn228, and Ser270.

It belongs to the IspH family. Requires [4Fe-4S] cluster as cofactor.

It catalyses the reaction isopentenyl diphosphate + 2 oxidized [2Fe-2S]-[ferredoxin] + H2O = (2E)-4-hydroxy-3-methylbut-2-enyl diphosphate + 2 reduced [2Fe-2S]-[ferredoxin] + 2 H(+). The catalysed reaction is dimethylallyl diphosphate + 2 oxidized [2Fe-2S]-[ferredoxin] + H2O = (2E)-4-hydroxy-3-methylbut-2-enyl diphosphate + 2 reduced [2Fe-2S]-[ferredoxin] + 2 H(+). It functions in the pathway isoprenoid biosynthesis; dimethylallyl diphosphate biosynthesis; dimethylallyl diphosphate from (2E)-4-hydroxy-3-methylbutenyl diphosphate: step 1/1. It participates in isoprenoid biosynthesis; isopentenyl diphosphate biosynthesis via DXP pathway; isopentenyl diphosphate from 1-deoxy-D-xylulose 5-phosphate: step 6/6. Its function is as follows. Catalyzes the conversion of 1-hydroxy-2-methyl-2-(E)-butenyl 4-diphosphate (HMBPP) into a mixture of isopentenyl diphosphate (IPP) and dimethylallyl diphosphate (DMAPP). Acts in the terminal step of the DOXP/MEP pathway for isoprenoid precursor biosynthesis. This chain is 4-hydroxy-3-methylbut-2-enyl diphosphate reductase, found in Nitrosomonas europaea (strain ATCC 19718 / CIP 103999 / KCTC 2705 / NBRC 14298).